The sequence spans 34 residues: Delta-theraphotoxin-Hm1b (34 aa).

Cystine bridges form between Cys-2–Cys-16, Cys-9–Cys-21, and Cys-15–Cys-28. Residue Phe-34 is modified to Phenylalanine amide.

The protein belongs to the neurotoxin 10 (Hwtx-1) family. 09 (HaTx) subfamily. As to expression, expressed by the venom gland.

Its subcellular location is the secreted. Gating-modifier toxin that potently and selectively acts on Nav1.1/SCN1A and Nav1.3/SCN3A. It enhances hNav1.1/SCN1A currents and delays fast inactivation of the channel (EC(50)=11.6 nM), leading to a sustained current. Similar effects are observed at Nav1.3/SCN3A (EC(50)=11.8 nM), but with less sustained currents. When tested on Nav1.2/SCN2A, the native toxin decreases the peak current by 50% at saturating concentration, whereas the recombinant toxin only shows a weak decrease of peak current. The native toxin specifically activates the voltage-gated sodium channel Nav1.1/SCN1A in somatosensory neurons to elicit acute pain and mechanical allodynia. When tested on Nav1.1/SCN1A, the toxin induces a hyperpolarising shift of the voltage-dependence of steady-state activation, and induces a depolarizing shift in the voltage dependence of inactivation. In addition, it does not modify the recovery from fast inactivation in Nav1.1/SCN1A. The toxin hydrophobic face probably interacts with the domain IV voltage-sensor of Nav1.1/SCN1A and Nav1.3/SCN3A and may trap the voltage-sensing S4 helix in a partially activated state. In vivo, intracerebroventricular injection into mice elicits convulsions, spasms, tremors and rapid death. When injected into mouse hindpaw, the toxin elicits an immediate and robust response to pain. However, intraplantar injection of toxin does not cause neurogenic inflammation or alter sensitivity to heat, indicative of a modality-specific effect on mechanosensitive neurons. This Heteroscodra maculata (Togo starburst tarantula) protein is Delta-theraphotoxin-Hm1b.